A 307-amino-acid chain; its full sequence is tRNA pseudouridine synthase B (307 aa).

Residue D41 is the Nucleophile of the active site.

Belongs to the pseudouridine synthase TruB family. Type 1 subfamily.

It catalyses the reaction uridine(55) in tRNA = pseudouridine(55) in tRNA. Responsible for synthesis of pseudouridine from uracil-55 in the psi GC loop of transfer RNAs. In Prochlorococcus marinus (strain MIT 9312), this protein is tRNA pseudouridine synthase B.